We begin with the raw amino-acid sequence, 493 residues long: Glutamyl-tRNA(Gln) amidotransferase subunit A (493 aa).

Residues Lys-78 and Ser-158 each act as charge relay system in the active site. Ser-182 (acyl-ester intermediate) is an active-site residue.

The protein belongs to the amidase family. GatA subfamily. Heterotrimer of A, B and C subunits.

The catalysed reaction is L-glutamyl-tRNA(Gln) + L-glutamine + ATP + H2O = L-glutaminyl-tRNA(Gln) + L-glutamate + ADP + phosphate + H(+). Allows the formation of correctly charged Gln-tRNA(Gln) through the transamidation of misacylated Glu-tRNA(Gln) in organisms which lack glutaminyl-tRNA synthetase. The reaction takes place in the presence of glutamine and ATP through an activated gamma-phospho-Glu-tRNA(Gln). The protein is Glutamyl-tRNA(Gln) amidotransferase subunit A of Rickettsia typhi (strain ATCC VR-144 / Wilmington).